A 171-amino-acid polypeptide reads, in one-letter code: Large ribosomal subunit protein uL10 (171 aa).

It belongs to the universal ribosomal protein uL10 family. As to quaternary structure, part of the ribosomal stalk of the 50S ribosomal subunit. The N-terminus interacts with L11 and the large rRNA to form the base of the stalk. The C-terminus forms an elongated spine to which L12 dimers bind in a sequential fashion forming a multimeric L10(L12)X complex.

Forms part of the ribosomal stalk, playing a central role in the interaction of the ribosome with GTP-bound translation factors. The chain is Large ribosomal subunit protein uL10 from Nitrosomonas eutropha (strain DSM 101675 / C91 / Nm57).